A 56-amino-acid polypeptide reads, in one-letter code: Protein YqiD (56 aa).

The chain crosses the membrane as a helical span at residues 2–22 (FIAWYWIVLIALVVVGYFLHL).

Its subcellular location is the cell inner membrane. The protein is Protein YqiD of Escherichia coli (strain K12).